The primary structure comprises 260 residues: MVKESAEILSEIRKNYILSTMKGGKRIDGRLPDEFRELTIIENYIPRANGSAYVALGNTRVVAGVKIEAGEPFPDTPDQGVLTTNVELLPIAFPSFEAGPPNDLAIEVSRVVDRGIRESKMISPEKLVIEQGKKVWIVFLDINVLDYDGNLIDASTIAAVAALRNAVVPASKEGGEDFKLPVSSTPISVTMVKIGDTLVCDPSLEEDQICGGRITVTTTEDGHIRAMQKGEIGAFTVEDVKKAVKMSLEVGKKLREKYFR.

It belongs to the RNase PH family. Rrp42 subfamily. As to quaternary structure, component of the archaeal exosome complex. Forms a hexameric ring-like arrangement composed of 3 Rrp41-Rrp42 heterodimers. The hexameric ring associates with a trimer of Rrp4 and/or Csl4 subunits.

It localises to the cytoplasm. Functionally, non-catalytic component of the exosome, which is a complex involved in RNA degradation. Contributes to the structuring of the Rrp41 active site. This chain is Exosome complex component Rrp42, found in Thermoplasma acidophilum (strain ATCC 25905 / DSM 1728 / JCM 9062 / NBRC 15155 / AMRC-C165).